The chain runs to 302 residues: Succinate--CoA ligase [ADP-forming] subunit alpha (302 aa).

CoA-binding positions include 17-20, Lys-43, and 96-98; these read TGST and ITE. Substrate is bound at residue Tyr-159. The active-site Tele-phosphohistidine intermediate is the His-247.

This sequence belongs to the succinate/malate CoA ligase alpha subunit family. Heterotetramer of two alpha and two beta subunits.

The catalysed reaction is succinate + ATP + CoA = succinyl-CoA + ADP + phosphate. It catalyses the reaction GTP + succinate + CoA = succinyl-CoA + GDP + phosphate. It functions in the pathway carbohydrate metabolism; tricarboxylic acid cycle; succinate from succinyl-CoA (ligase route): step 1/1. Succinyl-CoA synthetase functions in the citric acid cycle (TCA), coupling the hydrolysis of succinyl-CoA to the synthesis of either ATP or GTP and thus represents the only step of substrate-level phosphorylation in the TCA. The alpha subunit of the enzyme binds the substrates coenzyme A and phosphate, while succinate binding and nucleotide specificity is provided by the beta subunit. The protein is Succinate--CoA ligase [ADP-forming] subunit alpha of Staphylococcus epidermidis (strain ATCC 35984 / DSM 28319 / BCRC 17069 / CCUG 31568 / BM 3577 / RP62A).